The chain runs to 375 residues: Carbamoyl phosphate synthase small chain (375 aa).

Residues 1–186 (MRALLALEDG…LEPGGCAWVG (186 aa)) are CPSase. The L-glutamine site is built by S45, G238, and G240. The region spanning 190–375 (RLVVYDFGIK…RNMVREAAGC (186 aa)) is the Glutamine amidotransferase type-1 domain. C265 serves as the catalytic Nucleophile. L-glutamine-binding residues include L266, Q269, N307, G309, and F310. Catalysis depends on residues H348 and E350.

The protein belongs to the CarA family. Composed of two chains; the small (or glutamine) chain promotes the hydrolysis of glutamine to ammonia, which is used by the large (or ammonia) chain to synthesize carbamoyl phosphate. Tetramer of heterodimers (alpha,beta)4.

It carries out the reaction hydrogencarbonate + L-glutamine + 2 ATP + H2O = carbamoyl phosphate + L-glutamate + 2 ADP + phosphate + 2 H(+). The catalysed reaction is L-glutamine + H2O = L-glutamate + NH4(+). Its pathway is amino-acid biosynthesis; L-arginine biosynthesis; carbamoyl phosphate from bicarbonate: step 1/1. It participates in pyrimidine metabolism; UMP biosynthesis via de novo pathway; (S)-dihydroorotate from bicarbonate: step 1/3. Its function is as follows. Small subunit of the glutamine-dependent carbamoyl phosphate synthetase (CPSase). CPSase catalyzes the formation of carbamoyl phosphate from the ammonia moiety of glutamine, carbonate, and phosphate donated by ATP, constituting the first step of 2 biosynthetic pathways, one leading to arginine and/or urea and the other to pyrimidine nucleotides. The small subunit (glutamine amidotransferase) binds and cleaves glutamine to supply the large subunit with the substrate ammonia. The protein is Carbamoyl phosphate synthase small chain of Nitratidesulfovibrio vulgaris (strain ATCC 29579 / DSM 644 / CCUG 34227 / NCIMB 8303 / VKM B-1760 / Hildenborough) (Desulfovibrio vulgaris).